Consider the following 383-residue polypeptide: Histidine decarboxylase (383 aa).

A substrate-binding site is contributed by H120. Position 233 is an N6-(pyridoxal phosphate)lysine (K233).

This sequence belongs to the group II decarboxylase family. Homotetramer. It depends on pyridoxal 5'-phosphate as a cofactor.

The enzyme catalyses L-histidine + H(+) = histamine + CO2. The polypeptide is Histidine decarboxylase (Acinetobacter baumannii (strain ATCC 17978 / DSM 105126 / CIP 53.77 / LMG 1025 / NCDC KC755 / 5377)).